The following is a 227-amino-acid chain: Large ribosomal subunit protein uL1 (227 aa).

This sequence belongs to the universal ribosomal protein uL1 family. As to quaternary structure, part of the 50S ribosomal subunit.

In terms of biological role, binds directly to 23S rRNA. The L1 stalk is quite mobile in the ribosome, and is involved in E site tRNA release. Functionally, protein L1 is also a translational repressor protein, it controls the translation of the L11 operon by binding to its mRNA. In Tropheryma whipplei (strain TW08/27) (Whipple's bacillus), this protein is Large ribosomal subunit protein uL1.